A 609-amino-acid polypeptide reads, in one-letter code: Nuclear factor 7, brain (609 aa).

A Tudor-knot domain is found at 21 to 75 (NVGSTYPCKRSDGSQHDAEIVKVRYNKQAGREEYYAHYVGLNRRQNEWVDKSRLV). The span at 74–84 (LVLTKPPKEGE) shows a compositional bias: basic and acidic residues. The interval 74–129 (LVLTKPPKEGETNGTDQEVTDTAEQPDSKTPQKRKIEEPEPEPKKAKVEEKDASKN) is disordered. Positions 85–102 (TNGTDQEVTDTAEQPDSK) are enriched in polar residues. Residue Thr-103 is modified to Phosphothreonine; by CDK1. Positions 107 to 127 (RKIEEPEPEPKKAKVEEKDAS) are enriched in basic and acidic residues. The RING-type zinc-finger motif lies at 145–185 (CPLCVELFKDPVMVACGHNFCRSCIDKAWEGQSSFACPECR). A B box-type zinc finger spans residues 219-260 (RPLEKCSEHDERLKLYCKDDGTLSCVICRDSLKHASHNFLPI). Positions 224, 227, 246, and 252 each coordinate Zn(2+). A coiled-coil region spans residues 278–371 (LEASLKVTEQ…SLAKERMEDT (94 aa)). The region spanning 413-609 (GPIQYIMWKE…VDPLRFVHNK (197 aa)) is the B30.2/SPRY domain.

In terms of assembly, monomer. Post-translationally, threonine (predominantly) and serine residues are phosphorylated during oocyte maturation, when CDK1 is active. In terms of tissue distribution, at the neurula stage, high expression in dorsal embryo region including neural folds and somites. Also high expression in adult brain (CNS) and low expression in oocytes.

The protein localises to the nucleus. Transcription factor that determines dorsal-ventral body axis. This Xenopus laevis (African clawed frog) protein is Nuclear factor 7, brain.